Consider the following 238-residue polypeptide: Chromosome partition protein MukE (238 aa).

It belongs to the MukE family. As to quaternary structure, interacts, and probably forms a ternary complex, with MukF and MukB. The complex formation is stimulated by calcium or magnesium.

The protein resides in the cytoplasm. Its subcellular location is the nucleoid. In terms of biological role, involved in chromosome condensation, segregation and cell cycle progression. May participate in facilitating chromosome segregation by condensation DNA from both sides of a centrally located replisome during cell division. Probably acts via its interaction with MukB and MukF. The sequence is that of Chromosome partition protein MukE from Haemophilus ducreyi (strain 35000HP / ATCC 700724).